Reading from the N-terminus, the 264-residue chain is 3-methyl-2-oxobutanoate hydroxymethyltransferase (264 aa).

Asp45 and Asp84 together coordinate Mg(2+). 3-methyl-2-oxobutanoate is bound by residues 45 to 46, Asp84, and Lys112; that span reads DS. Position 114 (Glu114) interacts with Mg(2+). Glu181 functions as the Proton acceptor in the catalytic mechanism.

The protein belongs to the PanB family. In terms of assembly, homodecamer; pentamer of dimers. Mg(2+) serves as cofactor.

The protein resides in the cytoplasm. The catalysed reaction is 3-methyl-2-oxobutanoate + (6R)-5,10-methylene-5,6,7,8-tetrahydrofolate + H2O = 2-dehydropantoate + (6S)-5,6,7,8-tetrahydrofolate. It participates in cofactor biosynthesis; (R)-pantothenate biosynthesis; (R)-pantoate from 3-methyl-2-oxobutanoate: step 1/2. Catalyzes the reversible reaction in which hydroxymethyl group from 5,10-methylenetetrahydrofolate is transferred onto alpha-ketoisovalerate to form ketopantoate. This chain is 3-methyl-2-oxobutanoate hydroxymethyltransferase, found in Escherichia coli O7:K1 (strain IAI39 / ExPEC).